Consider the following 365-residue polypeptide: UDP-N-acetylglucosamine--N-acetylmuramyl-(pentapeptide) pyrophosphoryl-undecaprenol N-acetylglucosamine transferase (365 aa).

Residues 12 to 14 (TGG), Asn128, Arg169, Ser195, and Gln296 each bind UDP-N-acetyl-alpha-D-glucosamine.

The protein belongs to the glycosyltransferase 28 family. MurG subfamily.

Its subcellular location is the cell inner membrane. It carries out the reaction di-trans,octa-cis-undecaprenyl diphospho-N-acetyl-alpha-D-muramoyl-L-alanyl-D-glutamyl-meso-2,6-diaminopimeloyl-D-alanyl-D-alanine + UDP-N-acetyl-alpha-D-glucosamine = di-trans,octa-cis-undecaprenyl diphospho-[N-acetyl-alpha-D-glucosaminyl-(1-&gt;4)]-N-acetyl-alpha-D-muramoyl-L-alanyl-D-glutamyl-meso-2,6-diaminopimeloyl-D-alanyl-D-alanine + UDP + H(+). Its pathway is cell wall biogenesis; peptidoglycan biosynthesis. Its function is as follows. Cell wall formation. Catalyzes the transfer of a GlcNAc subunit on undecaprenyl-pyrophosphoryl-MurNAc-pentapeptide (lipid intermediate I) to form undecaprenyl-pyrophosphoryl-MurNAc-(pentapeptide)GlcNAc (lipid intermediate II). In Gluconobacter oxydans (strain 621H) (Gluconobacter suboxydans), this protein is UDP-N-acetylglucosamine--N-acetylmuramyl-(pentapeptide) pyrophosphoryl-undecaprenol N-acetylglucosamine transferase.